The following is a 396-amino-acid chain: Phosphoglycerate kinase (396 aa).

Residues Asp-21–Asn-23, Arg-36, His-59–Lys-62, Arg-119, and Arg-156 each bind substrate. ATP is bound by residues Lys-206, Glu-325, and Gly-352–Ser-355.

It belongs to the phosphoglycerate kinase family. Monomer.

It localises to the cytoplasm. The enzyme catalyses (2R)-3-phosphoglycerate + ATP = (2R)-3-phospho-glyceroyl phosphate + ADP. The protein operates within carbohydrate degradation; glycolysis; pyruvate from D-glyceraldehyde 3-phosphate: step 2/5. In Staphylococcus haemolyticus (strain JCSC1435), this protein is Phosphoglycerate kinase.